The sequence spans 275 residues: Undecaprenyl-diphosphatase (275 aa).

The next 8 helical transmembrane spans lie at 2–22, 43–63, 83–103, 111–131, 161–181, 186–206, 225–245, and 255–275; these read LDIF…FLPI, FINM…IVIY, WQIW…GLPL, MTSW…FIVL, VLSM…AMLI, YVAT…ASLL, ILLV…KFLL, and PFGW…LVFA.

Belongs to the UppP family.

It is found in the cell membrane. The enzyme catalyses di-trans,octa-cis-undecaprenyl diphosphate + H2O = di-trans,octa-cis-undecaprenyl phosphate + phosphate + H(+). Functionally, catalyzes the dephosphorylation of undecaprenyl diphosphate (UPP). Confers resistance to bacitracin. The polypeptide is Undecaprenyl-diphosphatase (Lactobacillus delbrueckii subsp. bulgaricus (strain ATCC 11842 / DSM 20081 / BCRC 10696 / JCM 1002 / NBRC 13953 / NCIMB 11778 / NCTC 12712 / WDCM 00102 / Lb 14)).